The following is a 255-amino-acid chain: Glutamate racemase (255 aa).

Residues 7 to 8 (DS) and 39 to 40 (YG) each bind substrate. The active-site Proton donor/acceptor is the Cys-70. Substrate is bound at residue 71-72 (NT). Cys-181 (proton donor/acceptor) is an active-site residue. Residue 182–183 (TH) participates in substrate binding.

It belongs to the aspartate/glutamate racemases family.

It catalyses the reaction L-glutamate = D-glutamate. It participates in cell wall biogenesis; peptidoglycan biosynthesis. Functionally, provides the (R)-glutamate required for cell wall biosynthesis. This chain is Glutamate racemase, found in Helicobacter pylori (strain G27).